Consider the following 1608-residue polypeptide: MKNNNFRLSAAGKLAAALAIILAASAGAYAAEIVAANGANGPGVSTAATGAQVVDIVAPNGNGLSHNQYQDFNVNQPGAVLNNSREAGLSQLAGQLGANPNLGGREASVILNEVIGRNPSLLHGQQEIFGMAADYVLANPNGISCQSCGFINTSHSSLVVGNPLVENGVLQGYSTFGNRNTLSLNGTLNAGGVLDLIAPKIDSRGEVIVQDFKQSNGKVTSAAINAISGLNRVARDGTVQASQQMPTALDSYYLGSMQAGRINIINTAQGSGVKLAGSLNAGDELKVKAYDIRSESRVDDASSNKNGGDNYQNYRGGIYVNDRSSSQTLTRTELKGKNISLVADNHAHLTATDIRGEDITLQGGKLTLDGQQLKQTQGHTDDRWFYSWQYDVTREREQLQQAGSTVAASGSAKLISTQEDVKLLGANVSADRALSVKAARDVHLAGLVEKDKSSERGYQRNHTSSLRTGRWSNSDESESLKASELRSEGELTLKAGRNVSTQGAKVHAQRDLTIDADNQIQVGVQKTANAKAVRDDKTSWGGIGGGDNKNNSNRREISHASELTSGGTLRLNGQQGVTITGSKARGQKGGEVTATHGGLRIDNALSTTVDKIDARTGTAFNITSSSHKADNSYQSSTASELKSDTNLTLVSHKDADVIGSQVASGGELSVESKTGNINVKAAERQQNIDEQKTALTVNGYAKEAGDKQYRAGLRIEHTRDSEKTTRTENSASSLSGGSVKLKAEKDVTFSGSKLVADKGDASVSGNKVSFLAADDKTASNTEQTKIGGGFYYTGGIDKLGSGVEAGYENNKTQAQSSKAITSGSDVKGNLTINARDKLTQQGAQHSVGGAYQENAAGVDHLAAADTASTTTTKTDVGVNIGANVDYSAVTRPVERAVGKAAKLDATGVINDIGGIGAPNVGLDIGAQGGSSEKRSSSSQAVVSSVQAGSIDINAKGEVRDQGTQYQASKGAVNLTADSHRSEAAANRQDEQSRDTRGSAGVRVYTTTGSDLTVDAKGEGGTQRSNSSASQAVTGSIDAANGINVNVKKDAIYQGTALNGGRGKTAVNAGGDIRLDQASDKQSESRSGFNVKASAKGGFTADSKNFGAGFGGGTHNGESSSSTAQVGNISGQQGVELKAGRDLTLQGTDVKSQGDVSLSAGNKVALQAAESTQTRKESKLSGNIDLGAGSSDSKEKTGGNLSAGGAFDIAKVNESATERQGATIASDGKVTLSANGKGDDALHLQGAKVSGGSAALEAKNGGILLESAKNEQHKDNWSLGIKANAKGGQTFNKDAGGKVDPNTGKDTHTLGAGLKVGVEQQDKTTHANTGITAGDVTLNSGKDTRLAGARVDADSVQGKVGGDLHVESRKDVENGVKVDVDAGLSHSNDPGSSITSKLSKVGTPRYAGKVKEKLEAGVNKVADATTDKYNSVARRLDPQQDTTGAVSFSKAEGKVTLPATPAGEKPQGPLWDRGARTVGGAVKDSITGPAGRQGHLKVNADVVNNNAVGEQSAIAGKNGVALQVGGQTQLTGGEIRSQQGKVELGGSQVSQQDVNGQRYQGGGRVDAAATVGGLLGGAAKQSVAGNVPFASGHASTQQADAKAGVFSGK.

Positions 1-30 (MKNNNFRLSAAGKLAAALAIILAASAGAYA) are cleaved as a signal peptide. 6 disordered regions span residues 296 to 315 (SRVD…QNYR), 452 to 488 (KSSE…LRSE), 716 to 737 (EHTR…LSGG), 971 to 1030 (AVNL…SASQ), 1168 to 1199 (AEST…TGGN), and 1437 to 1469 (PQQD…QGPL). 2 stretches are compositionally biased toward polar residues: residues 303-313 (SNKNGGDNYQN) and 460-474 (RNHT…WSNS). Basic and acidic residues-rich tracts occupy residues 478–488 (ESLKASELRSE) and 716–726 (EHTRDSEKTTR). Residues 727–736 (TENSASSLSG) show a composition bias toward polar residues. Basic and acidic residues predominate over residues 977-996 (DSHRSEAAANRQDEQSRDTR). Over residues 1021-1030 (TQRSNSSASQ) the composition is skewed to polar residues.

It localises to the cell outer membrane. Its function is as follows. Bacterial hemolysins are exotoxins that attack blood cell membranes and cause cell rupture by mechanisms not clearly defined. In terms of biological role, cell-bound hemolysin, which releases heme-iron from erythrocytes by interaction with the erythrocyte membrane. ShlA requires ShlB function. The protein is Hemolysin (shlA) of Serratia marcescens.